A 138-amino-acid chain; its full sequence is Basic phospholipase A2 PLA-N (138 aa).

A signal peptide spans M1–G16. 7 disulfides stabilise this stretch: C42/C131, C44/C60, C59/C111, C65/C138, C66/C104, C73/C97, and C91/C102. Residues Y43, G45, and G47 each contribute to the Ca(2+) site. H63 is a catalytic residue. Ca(2+) is bound at residue D64. D105 is an active-site residue.

The protein belongs to the phospholipase A2 family. Group II subfamily. D49 sub-subfamily. Requires Ca(2+) as cofactor. In terms of tissue distribution, expressed by the venom gland.

It localises to the secreted. The enzyme catalyses a 1,2-diacyl-sn-glycero-3-phosphocholine + H2O = a 1-acyl-sn-glycero-3-phosphocholine + a fatty acid + H(+). Snake venom phospholipase A2 (PLA2) that displays edema-inducing activities, as well as presynaptic neurotoxicity and myotoxicity. PLA2 catalyzes the calcium-dependent hydrolysis of the 2-acyl groups in 3-sn-phosphoglycerides. The sequence is that of Basic phospholipase A2 PLA-N from Protobothrops flavoviridis (Habu).